The sequence spans 394 residues: Dihydroorotase (394 aa).

The Zn(2+) site is built by histidine 15, histidine 17, lysine 98, histidine 135, histidine 175, and aspartate 245. The residue at position 98 (lysine 98) is an N6-carboxylysine.

It belongs to the metallo-dependent hydrolases superfamily. DHOase family. Class II DHOase subfamily. Zn(2+) serves as cofactor.

The enzyme catalyses (S)-dihydroorotate + H2O = N-carbamoyl-L-aspartate + H(+). The protein operates within pyrimidine metabolism; UMP biosynthesis via de novo pathway; (S)-dihydroorotate from bicarbonate: step 3/3. The protein is Dihydroorotase (PYR3) of Mycosarcoma maydis (Corn smut fungus).